The sequence spans 342 residues: Farnesyl pyrophosphate synthase 2 (342 aa).

3 residues coordinate isopentenyl diphosphate: Lys-47, Arg-50, and Gln-86. 2 residues coordinate Mg(2+): Asp-93 and Asp-97. Arg-102 provides a ligand contact to dimethylallyl diphosphate. Arg-103 serves as a coordination point for isopentenyl diphosphate. Residues Lys-190, Thr-191, Gln-229, Lys-246, and Lys-255 each coordinate dimethylallyl diphosphate.

This sequence belongs to the FPP/GGPP synthase family. Mg(2+) serves as cofactor.

The protein resides in the cytoplasm. The catalysed reaction is isopentenyl diphosphate + dimethylallyl diphosphate = (2E)-geranyl diphosphate + diphosphate. It catalyses the reaction isopentenyl diphosphate + (2E)-geranyl diphosphate = (2E,6E)-farnesyl diphosphate + diphosphate. It functions in the pathway isoprenoid biosynthesis; farnesyl diphosphate biosynthesis; farnesyl diphosphate from geranyl diphosphate and isopentenyl diphosphate: step 1/1. It participates in isoprenoid biosynthesis; geranyl diphosphate biosynthesis; geranyl diphosphate from dimethylallyl diphosphate and isopentenyl diphosphate: step 1/1. Catalyzes the sequential condensation of isopentenyl pyrophosphate with the allylic pyrophosphates, dimethylallyl pyrophosphate, and then with the resultant geranylpyrophosphate to the ultimate product farnesyl pyrophosphate. This chain is Farnesyl pyrophosphate synthase 2 (FPS2), found in Arabidopsis thaliana (Mouse-ear cress).